The primary structure comprises 311 residues: Dehydrogenase/reductase SDR family member 7C (311 aa).

A signal peptide spans 1-18; sequence MGIMAVLMLPLLLLGVSG. 5 residues coordinate NAD(+): serine 47, leucine 49, tyrosine 191, lysine 195, and serine 226. Tyrosine 191 (proton acceptor) is an active-site residue.

This sequence belongs to the short-chain dehydrogenases/reductases (SDR) family. In terms of tissue distribution, expressed in skeletal muscle, cardiac muscle and skin.

It is found in the sarcoplasmic reticulum membrane. The enzyme catalyses all-trans-retinol + NAD(+) = all-trans-retinal + NADH + H(+). In terms of biological role, NADH-dependent oxidoreductase which catalyzes the oxidation of all-trans-retinol to all-trans-retinal. Plays a role in the regulation of cardiac and skeletal muscle metabolic functions. Maintains Ca(2+) intracellular homeostasis by repressing Ca(2+) release from the sarcoplasmic reticulum (SR) in myotubes, possibly through local alternations in NAD/NADH or retinol/retinal. Also plays a role in Ca(2+) homeostasis by controlling Ca(2+) overload in the cytosol and the SR in myotubes. Involved in glucose uptake into skeletal muscles and muscle performance by activating PI3K and mTORC2-mediated AKT1 phosphorylation signaling pathways, possibly through the action of its downstream catalytic product all-trans-retinoic acid. This is Dehydrogenase/reductase SDR family member 7C from Rattus norvegicus (Rat).